The sequence spans 725 residues: Methionine--tRNA ligase (725 aa).

The 'HIGH' region signature appears at 27-37 (PYANGQIHIGH). 4 residues coordinate Zn(2+): Cys-158, Cys-161, Cys-171, and Cys-174. The 'KMSKS' region motif lies at 348 to 352 (KMSKS). Lys-351 contacts ATP. In terms of domain architecture, tRNA-binding spans 619–725 (DFAKIDLRIA…SGAKPGMRVK (107 aa)).

This sequence belongs to the class-I aminoacyl-tRNA synthetase family. MetG type 1 subfamily. In terms of assembly, homodimer. It depends on Zn(2+) as a cofactor.

The protein resides in the cytoplasm. It catalyses the reaction tRNA(Met) + L-methionine + ATP = L-methionyl-tRNA(Met) + AMP + diphosphate. In terms of biological role, is required not only for elongation of protein synthesis but also for the initiation of all mRNA translation through initiator tRNA(fMet) aminoacylation. The sequence is that of Methionine--tRNA ligase from Burkholderia pseudomallei (strain 1710b).